Consider the following 364-residue polypeptide: Aminomethyltransferase (364 aa).

The protein belongs to the GcvT family. The glycine cleavage system is composed of four proteins: P, T, L and H.

It catalyses the reaction N(6)-[(R)-S(8)-aminomethyldihydrolipoyl]-L-lysyl-[protein] + (6S)-5,6,7,8-tetrahydrofolate = N(6)-[(R)-dihydrolipoyl]-L-lysyl-[protein] + (6R)-5,10-methylene-5,6,7,8-tetrahydrofolate + NH4(+). The glycine cleavage system catalyzes the degradation of glycine. This is Aminomethyltransferase from Escherichia coli O81 (strain ED1a).